The primary structure comprises 473 residues: Photosystem II CP43 reaction center protein (473 aa).

Positions 1-14 (MKILYSLRRFYHVE) are excised as a propeptide. N-acetylthreonine is present on T15. A Phosphothreonine modification is found at T15. 5 helical membrane-spanning segments follow: residues 69 to 93 (LFEVAHFVPEKPMYEQGLILLPHLA), 134 to 155 (LLGPETLEESFPFFGYVWKDRN), 178 to 200 (KALYFGGVYDTWAPGGGDVRKIT), 255 to 275 (KPFAWARRAFVWSGEAYLSYS), and 291 to 312 (WFNNTAYPSEFYGPTGPEASQA). E367 provides a ligand contact to [CaMn4O5] cluster. A helical transmembrane segment spans residues 447–471 (RARAAAAGFEKGIDRDLEPVLFMTP).

Belongs to the PsbB/PsbC family. PsbC subfamily. In terms of assembly, PSII is composed of 1 copy each of membrane proteins PsbA, PsbB, PsbC, PsbD, PsbE, PsbF, PsbH, PsbI, PsbJ, PsbK, PsbL, PsbM, PsbT, PsbX, PsbY, PsbZ, Psb30/Ycf12, at least 3 peripheral proteins of the oxygen-evolving complex and a large number of cofactors. It forms dimeric complexes. Requires Binds multiple chlorophylls and provides some of the ligands for the Ca-4Mn-5O cluster of the oxygen-evolving complex. It may also provide a ligand for a Cl- that is required for oxygen evolution. PSII binds additional chlorophylls, carotenoids and specific lipids. as cofactor.

It localises to the plastid. It is found in the chloroplast thylakoid membrane. Its function is as follows. One of the components of the core complex of photosystem II (PSII). It binds chlorophyll and helps catalyze the primary light-induced photochemical processes of PSII. PSII is a light-driven water:plastoquinone oxidoreductase, using light energy to abstract electrons from H(2)O, generating O(2) and a proton gradient subsequently used for ATP formation. The protein is Photosystem II CP43 reaction center protein of Lemna minor (Common duckweed).